The sequence spans 435 residues: Glutamyl-tRNA reductase (435 aa).

Residues 49–52 (TCNR), Ser-109, 114–116 (ETQ), and Gln-120 each bind substrate. Cys-50 functions as the Nucleophile in the catalytic mechanism. NADP(+) is bound at residue 189–194 (GAGEMS).

Belongs to the glutamyl-tRNA reductase family. In terms of assembly, homodimer.

The catalysed reaction is (S)-4-amino-5-oxopentanoate + tRNA(Glu) + NADP(+) = L-glutamyl-tRNA(Glu) + NADPH + H(+). The protein operates within porphyrin-containing compound metabolism; protoporphyrin-IX biosynthesis; 5-aminolevulinate from L-glutamyl-tRNA(Glu): step 1/2. Its function is as follows. Catalyzes the NADPH-dependent reduction of glutamyl-tRNA(Glu) to glutamate 1-semialdehyde (GSA). This is Glutamyl-tRNA reductase from Listeria monocytogenes serotype 4b (strain CLIP80459).